The sequence spans 546 residues: Chaperonin GroEL (546 aa).

ATP is bound by residues 30–33 (TLGP), Lys51, 87–91 (DGTTT), Gly415, 479–481 (NAA), and Asp495. Positions 526-546 (KKDEPAMPAGGGMGGMGGMDF) are disordered. Over residues 534–546 (AGGGMGGMGGMDF) the composition is skewed to gly residues.

This sequence belongs to the chaperonin (HSP60) family. In terms of assembly, forms a cylinder of 14 subunits composed of two heptameric rings stacked back-to-back. Interacts with the co-chaperonin GroES.

It is found in the cytoplasm. The enzyme catalyses ATP + H2O + a folded polypeptide = ADP + phosphate + an unfolded polypeptide.. Its function is as follows. Together with its co-chaperonin GroES, plays an essential role in assisting protein folding. The GroEL-GroES system forms a nano-cage that allows encapsulation of the non-native substrate proteins and provides a physical environment optimized to promote and accelerate protein folding. This chain is Chaperonin GroEL, found in Xanthomonas campestris pv. campestris (strain 8004).